A 533-amino-acid polypeptide reads, in one-letter code: Beta-apo-4'-carotenal oxygenase (533 aa).

Active-site residues include Glu-226 and Cys-260.

This sequence belongs to the aldehyde dehydrogenase family.

The enzyme catalyses 4'-apo-beta-carotenal + NAD(+) + H2O = neurosporaxanthin + NADH + 2 H(+). Its function is as follows. Beta-apo-4'-carotenal oxygenase involved in the last step of synthesis of neurosporaxanthin, a carboxylic apocarotenoid acting as an essential protective pigment and leading to orange pigmentation. Converts the aldehyde beta-apo-4'-carotenal into neurosporaxanthin. Neurosporaxanthin is synthesized from geranyl-geranyl pyrophosphate (GGPP) through several enzymatic activities. Phytoene synthase activity performed by the bifunctional enzyme al-2 first produces phytoene from geranyl-geranyl pyrophosphate (GGPP). The phytoene dehydrogenase al-1 then introduces 5 desaturations to lead to 3,4-didehydrolycopene via the intermediates phytofluene, zeta-carotene, neurosporene and lycopene. Al-2 cyclase activity then converts 3,4-didehydrolycopene into torulene. Al-2 can also convet lycopene into gamma-carotene which in turn is converted to beta-carotene by an additional al-2 cyclization reaction. Torulene is the substrate of the dioxidase cao-2 that breaks the molecule, removing five carbon atoms to yield beta-apo-4'-carotenal, whereas the aldehyde dehydrogenase ylo-1 mediates the last step by converting beta-apo-4'-carotenal into neurosporaxanthin. In Neurospora crassa (strain ATCC 24698 / 74-OR23-1A / CBS 708.71 / DSM 1257 / FGSC 987), this protein is Beta-apo-4'-carotenal oxygenase.